A 333-amino-acid polypeptide reads, in one-letter code: Gramillins biosynthetic cluster protein FGSG_00039 (333 aa).

It participates in mycotoxin biosynthesis. In terms of biological role, part of the gene cluster that mediates the biosynthesis of gramillins A and B, bicyclic lipopeptides that induce cell death in maize leaves but not in wheat leaves. The nonribosomal peptide synthetase GRA1 incorporates respectively a glutamic adic (Glu), a leucine (Leu), a serine (Ser), a hydroxyglutamine (HOGln), a 2-amino decanoic acid, and 2 cysteins (CysB and CysA). The biosynthesis of 2-amino decanoic acid incorporated in gramillins could be initiated by a fatty acid synthase composed of the alpha and beta subunits FGSG_00036 and FGSG_11656. The cytochrome P450 monooxygenase FGSG_15680 could hydroxylate the fatty acid chain. Subsequent oxidation to the ketone by the oxidoreductase FGSG_00048 and transamination by aminotransferase FGSG_00049 could form 2-amino-decanoic acid. On the other hand, FGSG_15680 could also be responsible for the HO-modified glutamine at the gamma-position. Whether hydroxylation occurs on the fully assembled product or on the Gln residue prior to assembly into the gramillins requires further proof. The thioredoxin FGSG_00043 could also be required for the disulfide-bond formation between CysA and CysB. The specific involvement of the remaining proteins from the cluster is more difficult to discern, but could have broader regulatory (FGSG_00040 and FGSG_11657) or enzymatic functions (FGSG_00044 and FGSG_00045). The final C-domain of GRA1 does not possess the expected sequence of a termination CT domain, often implicated in macrocyclization and release of a cyclopeptidein fungal NRPs; and the thioesterase FGSG_00047 may act in concert with the terminal C-domain of GRA1 to catalyze the formation of the macrocyclic anhydride and release of the products. This chain is Gramillins biosynthetic cluster protein FGSG_00039, found in Gibberella zeae (strain ATCC MYA-4620 / CBS 123657 / FGSC 9075 / NRRL 31084 / PH-1) (Wheat head blight fungus).